The primary structure comprises 434 residues: Nicotinate phosphoribosyltransferase (434 aa).

Residue histidine 242 is modified to Phosphohistidine; by autocatalysis.

This sequence belongs to the NAPRTase family. In terms of processing, transiently phosphorylated on a His residue during the reaction cycle. Phosphorylation strongly increases the affinity for substrates and increases the rate of nicotinate D-ribonucleotide production. Dephosphorylation regenerates the low-affinity form of the enzyme, leading to product release.

The catalysed reaction is nicotinate + 5-phospho-alpha-D-ribose 1-diphosphate + ATP + H2O = nicotinate beta-D-ribonucleotide + ADP + phosphate + diphosphate. It functions in the pathway cofactor biosynthesis; NAD(+) biosynthesis; nicotinate D-ribonucleotide from nicotinate: step 1/1. Its function is as follows. Catalyzes the synthesis of beta-nicotinate D-ribonucleotide from nicotinate and 5-phospho-D-ribose 1-phosphate at the expense of ATP. This chain is Nicotinate phosphoribosyltransferase, found in Chelativorans sp. (strain BNC1).